Consider the following 433-residue polypeptide: Pyrimidine-nucleoside phosphorylase (433 aa).

81-83 is a binding site for phosphate; that stretch reads KHS. Residues glycine 88 and threonine 90 each contribute to the K(+) site. Phosphate is bound by residues threonine 92, 108 to 110, and threonine 120; that span reads KMS. Residues arginine 168 and lysine 187 each coordinate substrate. K(+) contacts are provided by leucine 243, alanine 246, and glutamate 255.

Belongs to the thymidine/pyrimidine-nucleoside phosphorylase family. Homodimer. Requires K(+) as cofactor.

The enzyme catalyses uridine + phosphate = alpha-D-ribose 1-phosphate + uracil. It carries out the reaction thymidine + phosphate = 2-deoxy-alpha-D-ribose 1-phosphate + thymine. It catalyses the reaction 2'-deoxyuridine + phosphate = 2-deoxy-alpha-D-ribose 1-phosphate + uracil. Catalyzes phosphorolysis of the pyrimidine nucleosides uridine, thymidine and 2'-deoxyuridine with the formation of the corresponding pyrimidine base and ribose-1-phosphate. The chain is Pyrimidine-nucleoside phosphorylase (pdp) from Staphylococcus haemolyticus (strain JCSC1435).